The following is a 506-amino-acid chain: Exopolysaccharide phosphotransferase NFA_48680 (506 aa).

The disordered stretch occupies residues 484–506 (PAPWERVSAPSRRPLPESTAGAA).

The protein belongs to the stealth family.

This Nocardia farcinica (strain IFM 10152) protein is Exopolysaccharide phosphotransferase NFA_48680.